Here is a 239-residue protein sequence, read N- to C-terminus: Ribosomal RNA small subunit methyltransferase G (239 aa).

Residues glycine 79, phenylalanine 84, alanine 130–glutamate 131, and arginine 149 contribute to the S-adenosyl-L-methionine site. Residues lysine 218 to serine 239 are disordered.

This sequence belongs to the methyltransferase superfamily. RNA methyltransferase RsmG family.

The protein resides in the cytoplasm. Functionally, specifically methylates the N7 position of a guanine in 16S rRNA. This chain is Ribosomal RNA small subunit methyltransferase G, found in Leuconostoc mesenteroides subsp. mesenteroides (strain ATCC 8293 / DSM 20343 / BCRC 11652 / CCM 1803 / JCM 6124 / NCDO 523 / NBRC 100496 / NCIMB 8023 / NCTC 12954 / NRRL B-1118 / 37Y).